A 234-amino-acid chain; its full sequence is Proteasome subunit alpha (234 aa).

The protein belongs to the peptidase T1A family. The 20S proteasome core is composed of 14 alpha and 14 beta subunits that assemble into four stacked heptameric rings, resulting in a barrel-shaped structure. The two inner rings, each composed of seven catalytic beta subunits, are sandwiched by two outer rings, each composed of seven alpha subunits. The catalytic chamber with the active sites is on the inside of the barrel. Has a gated structure, the ends of the cylinder being occluded by the N-termini of the alpha-subunits. Is capped at one or both ends by the proteasome regulatory ATPase, PAN.

It localises to the cytoplasm. Its activity is regulated as follows. The formation of the proteasomal ATPase PAN-20S proteasome complex, via the docking of the C-termini of PAN into the intersubunit pockets in the alpha-rings, triggers opening of the gate for substrate entry. Interconversion between the open-gate and close-gate conformations leads to a dynamic regulation of the 20S proteasome proteolysis activity. In terms of biological role, component of the proteasome core, a large protease complex with broad specificity involved in protein degradation. The protein is Proteasome subunit alpha of Picrophilus torridus (strain ATCC 700027 / DSM 9790 / JCM 10055 / NBRC 100828 / KAW 2/3).